The sequence spans 328 residues: L-serine dehydratase/L-threonine deaminase (328 aa).

Position 41 is an N6-(pyridoxal phosphate)lysine (Lys-41). Residue Pro-128 participates in pyridoxal 5'-phosphate binding.

It belongs to the serine/threonine dehydratase family. In terms of assembly, homodimer. Requires pyridoxal 5'-phosphate as cofactor. In terms of tissue distribution, predominantly expressed in the perivenous regions of the liver.

Its subcellular location is the cytoplasm. It carries out the reaction L-serine = pyruvate + NH4(+). The enzyme catalyses L-threonine = 2-oxobutanoate + NH4(+). It participates in carbohydrate biosynthesis; gluconeogenesis. Its function is as follows. Catalyzes the pyridoxal-phosphate-dependent dehydrative deamination of L-threonine and L-serine to ammonia and alpha-ketobutyrate and pyruvate, respectively. The polypeptide is L-serine dehydratase/L-threonine deaminase (SDS) (Homo sapiens (Human)).